The primary structure comprises 101 residues: RNA-binding protein Hfq (101 aa).

The Sm domain maps to 9–68; it reads DPFLNALRRERVPVSIYLVNGIKLQGQIESFDQFVILLKNTVSQMVYKHAISTVVPSRPV. Residues 63 to 101 are disordered; sequence VPSRPVSHHNNNPSGGSSNYHHGSTPASQPSQPESDDAE. Positions 70 to 86 are enriched in low complexity; the sequence is HHNNNPSGGSSNYHHGS.

This sequence belongs to the Hfq family. As to quaternary structure, homohexamer.

Functionally, RNA chaperone that binds small regulatory RNA (sRNAs) and mRNAs to facilitate mRNA translational regulation in response to envelope stress, environmental stress and changes in metabolite concentrations. Also binds with high specificity to tRNAs. The protein is RNA-binding protein Hfq of Sodalis glossinidius (strain morsitans).